The primary structure comprises 543 residues: MNTIIMIPVATAIVSLLVGTVTGYAIRKHSWEQKAQNAQNDADHILADAKAQVAAAEAEVNAQKQAAIAVKQSAENTKKEKILEAQEQIRDYRQKTEDELNSKKDNLARQENRLQQREDTLDHKNSLLDEREAGLTEKEDQLKQQNASLKAKLDEADELVGIRRQKLYDVAKLDKDQAKKIVLDQLSDELVKERAEMIRNSNEEVMAKADRYANQVIIDAIQSSAADTVAETTVSVVDLPNEEMKGRIIGREGRNIRSFEALTGIDLIIDDTPKVVTLSGFDPIRREIAKRAMERLIKDGRIHPARIEEMVDKARKEVNDDIYEAGESALMELGIHRMNPELVKTLGRLKYHTSYGQNVLSHSIEVGKLAGTMAAELGLDEKLAVRAGLLHDIGKAIDHDIEGSHVEIGVELTRKYHEPDVVVNAIAAHHGDVPKLSFIAELVVAADTISSARPGARSESLENYIRRLTDLEKIAKSYQGVKQAYAIQAGREVRVMVEPDEISDDRTVILARDIRNQVEKELDYPGNIKITVIREKRVVAIAK.

A helical transmembrane segment spans residues 4 to 24 (IIMIPVATAIVSLLVGTVTGY). In terms of domain architecture, KH spans 233–296 (TVSVVDLPNE…EIAKRAMERL (64 aa)). The 94-residue stretch at 359-452 (VLSHSIEVGK…VVAADTISSA (94 aa)) folds into the HD domain.

The protein belongs to the RNase Y family.

The protein localises to the cell membrane. In terms of biological role, endoribonuclease that initiates mRNA decay. The polypeptide is Ribonuclease Y (Lactobacillus acidophilus (strain ATCC 700396 / NCK56 / N2 / NCFM)).